Reading from the N-terminus, the 104-residue chain is Acetylcholine receptor subunit alpha (104 aa).

At 1 to 104 the chain is on the extracellular side; it reads NPPAIFKSYC…YFIVNVIIPC (104 aa). Cystine bridges form between cysteine 10–cysteine 24 and cysteine 74–cysteine 75. N-linked (GlcNAc...) asparagine glycosylation is present at asparagine 23.

It belongs to the ligand-gated ion channel (TC 1.A.9) family. Acetylcholine receptor (TC 1.A.9.1) subfamily. Alpha-1/CHRNA1 sub-subfamily. In terms of assembly, one of the alpha chains that assemble within the acetylcholine receptor, a pentamer of two alpha chains, a beta, a delta, and a gamma or epsilon chains.

It is found in the postsynaptic cell membrane. Its subcellular location is the cell membrane. It catalyses the reaction K(+)(in) = K(+)(out). The catalysed reaction is Na(+)(in) = Na(+)(out). Functionally, upon acetylcholine binding, the AChR responds by an extensive change in conformation that affects all subunits and leads to opening of an ion-conducting channel across the plasma membrane. The polypeptide is Acetylcholine receptor subunit alpha (CHRNA1) (Naja naja (Indian cobra)).